The primary structure comprises 288 residues: Diaminopimelate epimerase (288 aa).

The substrate site is built by N14 and N67. C76 (proton donor) is an active-site residue. Substrate contacts are provided by residues 77–78 (GN), N166, N199, and 217–218 (ER). The active-site Proton acceptor is the C226. 227 to 228 (GT) serves as a coordination point for substrate.

Belongs to the diaminopimelate epimerase family. As to quaternary structure, homodimer.

The protein localises to the cytoplasm. The enzyme catalyses (2S,6S)-2,6-diaminopimelate = meso-2,6-diaminopimelate. The protein operates within amino-acid biosynthesis; L-lysine biosynthesis via DAP pathway; DL-2,6-diaminopimelate from LL-2,6-diaminopimelate: step 1/1. Its function is as follows. Catalyzes the stereoinversion of LL-2,6-diaminopimelate (L,L-DAP) to meso-diaminopimelate (meso-DAP), a precursor of L-lysine and an essential component of the bacterial peptidoglycan. This Bacillus cytotoxicus (strain DSM 22905 / CIP 110041 / 391-98 / NVH 391-98) protein is Diaminopimelate epimerase.